A 207-amino-acid chain; its full sequence is Guanylate kinase (207 aa).

One can recognise a Guanylate kinase-like domain in the interval 6-185 (GLLIVLSGPS…AKERIQSIVE (180 aa)). Position 13–20 (13–20 (GPSGVGKG)) interacts with ATP.

Belongs to the guanylate kinase family.

The protein resides in the cytoplasm. The enzyme catalyses GMP + ATP = GDP + ADP. Functionally, essential for recycling GMP and indirectly, cGMP. This chain is Guanylate kinase, found in Staphylococcus haemolyticus (strain JCSC1435).